Consider the following 117-residue polypeptide: uncharacterized protein (117 aa).

This is an uncharacterized protein from Schizosaccharomyces pombe (strain 972 / ATCC 24843) (Fission yeast).